We begin with the raw amino-acid sequence, 853 residues long: ATP-dependent zinc metalloprotease FtsH (853 aa).

Over 1–5 (MKNKK) the chain is Cytoplasmic. The helical transmembrane segment at 6-26 (YLQFGGIAAVILIVLFLVSLF) threads the bilayer. The Extracellular portion of the chain corresponds to 27 to 113 (SSDTRNFQEV…SYTTNVTQES (87 aa)). A helical membrane pass occupies residues 114 to 134 (FLMSMLSFILPMVIIFGLLMF). The Cytoplasmic portion of the chain corresponds to 135–853 (FLTRMQGGGM…NPENEGDNRG (719 aa)). 205–212 (GPPGTGKT) serves as a coordination point for ATP. Histidine 427 serves as a coordination point for Zn(2+). The active site involves glutamate 428. Zn(2+) contacts are provided by histidine 431 and aspartate 503. Basic and acidic residues-rich tracts occupy residues 619–632 (ESTR…REPV) and 639–648 (ALERGEEPPK). Positions 619–853 (ESTRFPRQEN…NPENEGDNRG (235 aa)) are disordered. Residues 677–695 (PASSAGVAPAAGAAAGSYG) are compositionally biased toward low complexity. Polar residues-rich tracts occupy residues 728–739 (TPAQAPEQSPDS) and 770–788 (MDQS…QESP). Residues 796–813 (LPDHERSDYPEKAQKESV) show a composition bias toward basic and acidic residues.

The protein in the central section; belongs to the AAA ATPase family. In the C-terminal section; belongs to the peptidase M41 family. In terms of assembly, homohexamer. Zn(2+) serves as cofactor.

It is found in the cell membrane. Acts as a processive, ATP-dependent zinc metallopeptidase for both cytoplasmic and membrane proteins. Plays a role in the quality control of integral membrane proteins. This is ATP-dependent zinc metalloprotease FtsH from Corynebacterium glutamicum (strain ATCC 13032 / DSM 20300 / JCM 1318 / BCRC 11384 / CCUG 27702 / LMG 3730 / NBRC 12168 / NCIMB 10025 / NRRL B-2784 / 534).